Consider the following 365-residue polypeptide: MNILKISKQTLRNNIKIIREYIGNAKMCFPVKANAYGHGIEDIVENTHDLVDFFAVANSLEAFRVTAVAKNPVLVFGVIYYEYIEKMISENIRVSIQDYEDIEKLEQIAKELDKKVYAHININTGMNRMGVDYNDACRTIQRAYESDWLILEGVYSHLACADNRDHPTNIKQKNRFDSIVKFTKGLSQDIICHLSNSYGFLGQKGICYDMVRPGILSYGFLPEFYVDRVIREIKPIARLLSKVVKIITLQEGEGVGYSLIYRGFEDEQLAVIPIGYGDGFPRELGDRGFVNINDVMYPMAGRMSMDGLTVSLGINEYDVKVGDTVELISAIPRNRNSAFSIAKQTNTIEYDIMSTLNDRIIRKII.

Catalysis depends on Lys-32, which acts as the Proton acceptor; specific for D-alanine. Position 32 is an N6-(pyridoxal phosphate)lysine (Lys-32). Arg-128 provides a ligand contact to substrate. Tyr-257 functions as the Proton acceptor; specific for L-alanine in the catalytic mechanism. Substrate is bound at residue Met-305.

It belongs to the alanine racemase family. Pyridoxal 5'-phosphate serves as cofactor.

It carries out the reaction L-alanine = D-alanine. It participates in amino-acid biosynthesis; D-alanine biosynthesis; D-alanine from L-alanine: step 1/1. Functionally, catalyzes the interconversion of L-alanine and D-alanine. May also act on other amino acids. The polypeptide is Alanine racemase (alr) (Francisella tularensis subsp. tularensis (strain SCHU S4 / Schu 4)).